Reading from the N-terminus, the 486-residue chain is Glutamate--tRNA ligase (486 aa).

The 'HIGH' region signature appears at 11–21 (PSPTGLLHIGN). Positions 255–259 (KLSKR) match the 'KMSKS' region motif. Residue Lys258 participates in ATP binding.

Belongs to the class-I aminoacyl-tRNA synthetase family. Glutamate--tRNA ligase type 1 subfamily. Monomer.

The protein resides in the cytoplasm. It catalyses the reaction tRNA(Glu) + L-glutamate + ATP = L-glutamyl-tRNA(Glu) + AMP + diphosphate. Functionally, catalyzes the attachment of glutamate to tRNA(Glu) in a two-step reaction: glutamate is first activated by ATP to form Glu-AMP and then transferred to the acceptor end of tRNA(Glu). This chain is Glutamate--tRNA ligase, found in Streptococcus pneumoniae serotype 19F (strain G54).